The primary structure comprises 156 residues: Endoribonuclease YbeY (156 aa).

Zn(2+) is bound by residues H117, H121, and H127.

It belongs to the endoribonuclease YbeY family. Zn(2+) serves as cofactor.

The protein resides in the cytoplasm. Its function is as follows. Single strand-specific metallo-endoribonuclease involved in late-stage 70S ribosome quality control and in maturation of the 3' terminus of the 16S rRNA. The polypeptide is Endoribonuclease YbeY (Shewanella piezotolerans (strain WP3 / JCM 13877)).